The primary structure comprises 389 residues: Phospholipid phosphatase-related protein type 2 (389 aa).

A run of 2 helical transmembrane segments spans residues 14–34 and 66–86; these read IIPC…AFFP and FLGV…AGQV. N102 is a glycosylation site (N-linked (GlcNAc...) asparagine). 3 consecutive transmembrane segments (helical) span residues 147–167, 176–196, and 203–223; these read AALC…VFRV, SLCL…VAEY, and VLAG…CVVH. A phosphoserine mark is found at S236 and S249. Disordered regions lie at residues 255 to 280 and 295 to 351; these read SVAQ…PQNC and APAM…GRKL. The span at 265–278 shows a compositional bias: polar residues; it reads SHSTPARLTPSKPQ. Residues 314-339 show a composition bias toward pro residues; that stretch reads TPLPLPLPLPAPAPSQGPSPSSPGPG.

This sequence belongs to the PA-phosphatase related phosphoesterase family.

Its subcellular location is the membrane. In Bos taurus (Bovine), this protein is Phospholipid phosphatase-related protein type 2.